A 280-amino-acid polypeptide reads, in one-letter code: Release factor glutamine methyltransferase (280 aa).

S-adenosyl-L-methionine contacts are provided by residues 120–124, aspartate 143, and asparagine 186; that span reads GTGSG. 186 to 189 lines the substrate pocket; sequence NPPY.

This sequence belongs to the protein N5-glutamine methyltransferase family. PrmC subfamily.

It catalyses the reaction L-glutaminyl-[peptide chain release factor] + S-adenosyl-L-methionine = N(5)-methyl-L-glutaminyl-[peptide chain release factor] + S-adenosyl-L-homocysteine + H(+). Functionally, methylates the class 1 translation termination release factors RF1/PrfA and RF2/PrfB on the glutamine residue of the universally conserved GGQ motif. This is Release factor glutamine methyltransferase from Koribacter versatilis (strain Ellin345).